Reading from the N-terminus, the 132-residue chain is Small ribosomal subunit protein uS8 (132 aa).

Belongs to the universal ribosomal protein uS8 family. In terms of assembly, part of the 30S ribosomal subunit. Contacts proteins S5 and S12.

Functionally, one of the primary rRNA binding proteins, it binds directly to 16S rRNA central domain where it helps coordinate assembly of the platform of the 30S subunit. The polypeptide is Small ribosomal subunit protein uS8 (Streptococcus pyogenes serotype M49 (strain NZ131)).